A 359-amino-acid chain; its full sequence is Stearoyl-CoA desaturase (359 aa).

The Cytoplasmic segment spans residues 1 to 72; it reads MPAHLLQEEI…EGPKPKLEYV (72 aa). Residues 73–93 form a helical membrane-spanning segment; the sequence is WRNIILMGLLHLGALYGITLI. Residue asparagine 75 coordinates substrate. The Lumenal portion of the chain corresponds to 94 to 97; that stretch reads PTCK. A helical membrane pass occupies residues 98–118; it reads IYTFLWVLFYYMMSALGITAG. At 119–217 the chain is on the cytoplasmic side; it reads VHRLWSHRTY…EKLVMFQRRY (99 aa). Fe cation contacts are provided by histidine 120 and histidine 125. A Histidine box-1 motif is present at residues 120–125; sequence HRLWSH. Residues asparagine 148, arginine 155, and aspartate 156 each contribute to the substrate site. Positions 157, 160, and 161 each coordinate Fe cation. Residues 157–161 carry the Histidine box-2 motif; it reads HRAHH. Positions 188 and 189 each coordinate substrate. Serine 203 carries the phosphoserine modification. Residues 218-237 form a helical membrane-spanning segment; that stretch reads YKPGVLLLCFILPTLVPWYL. Residues 238 to 241 lie on the Lumenal side of the membrane; the sequence is WGET. A helical membrane pass occupies residues 242–263; sequence FQNSLFFATLLRYAVVLNATWL. Position 262 (tryptophan 262) interacts with substrate. Over 264 to 359 the chain is Cytoplasmic; it reads VNSAAHMYGY…RTGEESCKSG (96 aa). Fe cation is bound by residues histidine 269, histidine 298, histidine 301, and histidine 302. The short motif at 298–302 is the Histidine box-3 element; sequence HNYHH.

Belongs to the fatty acid desaturase type 1 family. It depends on Fe(2+) as a cofactor.

Its subcellular location is the endoplasmic reticulum membrane. The enzyme catalyses octadecanoyl-CoA + 2 Fe(II)-[cytochrome b5] + O2 + 2 H(+) = (9Z)-octadecenoyl-CoA + 2 Fe(III)-[cytochrome b5] + 2 H2O. The catalysed reaction is hexadecanoyl-CoA + 2 Fe(II)-[cytochrome b5] + O2 + 2 H(+) = (9Z)-hexadecenoyl-CoA + 2 Fe(III)-[cytochrome b5] + 2 H2O. Its function is as follows. Stearoyl-CoA desaturase that utilizes O(2) and electrons from reduced cytochrome b5 to introduce the first double bond into saturated fatty acyl-CoA substrates. Catalyzes the insertion of a cis double bond at the delta-9 position into fatty acyl-CoA substrates including palmitoyl-CoA and stearoyl-CoA. Gives rise to a mixture of 16:1 and 18:1 unsaturated fatty acids. Plays an important role in lipid biosynthesis. Plays an important role in regulating the expression of genes that are involved in lipogenesis and in regulating mitochondrial fatty acid oxidation. Plays an important role in body energy homeostasis. Contributes to the biosynthesis of membrane phospholipids, cholesterol esters and triglycerides. The sequence is that of Stearoyl-CoA desaturase (SCD) from Capra hircus (Goat).